The chain runs to 374 residues: Ribosomal RNA large subunit methyltransferase G (374 aa).

Belongs to the methyltransferase superfamily. RlmG family.

Its subcellular location is the cytoplasm. It catalyses the reaction guanosine(1835) in 23S rRNA + S-adenosyl-L-methionine = N(2)-methylguanosine(1835) in 23S rRNA + S-adenosyl-L-homocysteine + H(+). Its function is as follows. Specifically methylates the guanine in position 1835 (m2G1835) of 23S rRNA. This is Ribosomal RNA large subunit methyltransferase G from Pseudomonas aeruginosa (strain ATCC 15692 / DSM 22644 / CIP 104116 / JCM 14847 / LMG 12228 / 1C / PRS 101 / PAO1).